The following is a 171-amino-acid chain: ATP synthase subunit b (171 aa).

The helical transmembrane segment at 19 to 39 threads the bilayer; that stretch reads VGVGLILFIAIVIWAKAPAMI.

It belongs to the ATPase B chain family. F-type ATPases have 2 components, F(1) - the catalytic core - and F(0) - the membrane proton channel. F(1) has five subunits: alpha(3), beta(3), gamma(1), delta(1), epsilon(1). F(0) has three main subunits: a(1), b(2) and c(10-14). The alpha and beta chains form an alternating ring which encloses part of the gamma chain. F(1) is attached to F(0) by a central stalk formed by the gamma and epsilon chains, while a peripheral stalk is formed by the delta and b chains.

It localises to the cell inner membrane. Its function is as follows. F(1)F(0) ATP synthase produces ATP from ADP in the presence of a proton or sodium gradient. F-type ATPases consist of two structural domains, F(1) containing the extramembraneous catalytic core and F(0) containing the membrane proton channel, linked together by a central stalk and a peripheral stalk. During catalysis, ATP synthesis in the catalytic domain of F(1) is coupled via a rotary mechanism of the central stalk subunits to proton translocation. In terms of biological role, component of the F(0) channel, it forms part of the peripheral stalk, linking F(1) to F(0). The chain is ATP synthase subunit b from Caulobacter sp. (strain K31).